We begin with the raw amino-acid sequence, 350 residues long: tRNA pseudouridine synthase D (350 aa).

The Nucleophile role is filled by aspartate 79. Residues 154 to 306 (GAPNYYGPQR…EQERRPIVLY (153 aa)) form the TRUD domain.

The protein belongs to the pseudouridine synthase TruD family.

The enzyme catalyses uridine(13) in tRNA = pseudouridine(13) in tRNA. In terms of biological role, responsible for synthesis of pseudouridine from uracil-13 in transfer RNAs. The protein is tRNA pseudouridine synthase D of Pseudoalteromonas atlantica (strain T6c / ATCC BAA-1087).